The following is a 199-amino-acid chain: Molybdenum cofactor guanylyltransferase (199 aa).

GTP is bound by residues 12–14, Lys25, Asn53, Asp71, and Asp101; that span reads LAG. Asp101 contacts Mg(2+).

Belongs to the MobA family. In terms of assembly, monomer. Requires Mg(2+) as cofactor.

It is found in the cytoplasm. It catalyses the reaction Mo-molybdopterin + GTP + H(+) = Mo-molybdopterin guanine dinucleotide + diphosphate. In terms of biological role, transfers a GMP moiety from GTP to Mo-molybdopterin (Mo-MPT) cofactor (Moco or molybdenum cofactor) to form Mo-molybdopterin guanine dinucleotide (Mo-MGD) cofactor. In Polynucleobacter asymbioticus (strain DSM 18221 / CIP 109841 / QLW-P1DMWA-1) (Polynucleobacter necessarius subsp. asymbioticus), this protein is Molybdenum cofactor guanylyltransferase.